A 342-amino-acid polypeptide reads, in one-letter code: Ribosomal RNA small subunit methyltransferase C (342 aa).

This sequence belongs to the methyltransferase superfamily. RsmC family. In terms of assembly, monomer.

It is found in the cytoplasm. The enzyme catalyses guanosine(1207) in 16S rRNA + S-adenosyl-L-methionine = N(2)-methylguanosine(1207) in 16S rRNA + S-adenosyl-L-homocysteine + H(+). In terms of biological role, specifically methylates the guanine in position 1207 of 16S rRNA in the 30S particle. The chain is Ribosomal RNA small subunit methyltransferase C from Salmonella choleraesuis (strain SC-B67).